Reading from the N-terminus, the 876-residue chain is Alanine--tRNA ligase (876 aa).

4 residues coordinate Zn(2+): His-564, His-568, Cys-666, and His-670.

Belongs to the class-II aminoacyl-tRNA synthetase family. As to quaternary structure, homotetramer. Zn(2+) is required as a cofactor.

The protein localises to the cytoplasm. It catalyses the reaction tRNA(Ala) + L-alanine + ATP = L-alanyl-tRNA(Ala) + AMP + diphosphate. Functionally, catalyzes the attachment of alanine to tRNA(Ala) in a two-step reaction: alanine is first activated by ATP to form Ala-AMP and then transferred to the acceptor end of tRNA(Ala). Also edits incorrectly charged Ser-tRNA(Ala) and Gly-tRNA(Ala) via its editing domain. This chain is Alanine--tRNA ligase, found in Salmonella paratyphi B (strain ATCC BAA-1250 / SPB7).